We begin with the raw amino-acid sequence, 311 residues long: N-acetyl-gamma-glutamyl-phosphate reductase (311 aa).

Cys-117 is a catalytic residue.

This sequence belongs to the NAGSA dehydrogenase family. Type 2 subfamily.

Its subcellular location is the cytoplasm. It catalyses the reaction N-acetyl-L-glutamate 5-semialdehyde + phosphate + NADP(+) = N-acetyl-L-glutamyl 5-phosphate + NADPH + H(+). It participates in amino-acid biosynthesis; L-arginine biosynthesis; N(2)-acetyl-L-ornithine from L-glutamate: step 3/4. Catalyzes the NADPH-dependent reduction of N-acetyl-5-glutamyl phosphate to yield N-acetyl-L-glutamate 5-semialdehyde. The chain is N-acetyl-gamma-glutamyl-phosphate reductase from Brucella anthropi (strain ATCC 49188 / DSM 6882 / CCUG 24695 / JCM 21032 / LMG 3331 / NBRC 15819 / NCTC 12168 / Alc 37) (Ochrobactrum anthropi).